Here is a 160-residue protein sequence, read N- to C-terminus: uncharacterized protein (160 aa).

To A.fulgidus AF1717.

This is an uncharacterized protein from Bacillus subtilis (strain 168).